Here is a 315-residue protein sequence, read N- to C-terminus: MSDSLRIIFAGTPDFAARHLDALLTSGHNVVGVFTQPDRPAGRGKKLMPSPVKVLAEEKGLPVFQPVSLRPQENQQLVADLHADVMVVVAYGLILPKAVLDMPRLGCINVHGSLLPRWRGAAPIQRSLWAGDAETGVTIMQMDVGLDTGDMLYKLACPITAEDTSGSLYNKLAELGPQGLITTLKQLADGTAAPEAQNEALVTHAEKLSKEEARIDWSLSAVQLERCIRAFNPWPMSWLEIDGQPVKVWQASVIEDATQSLPGTILAATKQGIQVATGKGILNLLSLQPAGKKAMSAQDLLNSRREWFIPGNRLA.

113–116 (SLLP) provides a ligand contact to (6S)-5,6,7,8-tetrahydrofolate.

The protein belongs to the Fmt family.

The enzyme catalyses L-methionyl-tRNA(fMet) + (6R)-10-formyltetrahydrofolate = N-formyl-L-methionyl-tRNA(fMet) + (6S)-5,6,7,8-tetrahydrofolate + H(+). Its function is as follows. Attaches a formyl group to the free amino group of methionyl-tRNA(fMet). The formyl group appears to play a dual role in the initiator identity of N-formylmethionyl-tRNA by promoting its recognition by IF2 and preventing the misappropriation of this tRNA by the elongation apparatus. The chain is Methionyl-tRNA formyltransferase from Salmonella enteritidis PT4 (strain P125109).